We begin with the raw amino-acid sequence, 153 residues long: Ribosome maturation factor RimP (153 aa).

Belongs to the RimP family.

It is found in the cytoplasm. In terms of biological role, required for maturation of 30S ribosomal subunits. The sequence is that of Ribosome maturation factor RimP from Clostridium botulinum (strain Alaska E43 / Type E3).